We begin with the raw amino-acid sequence, 869 residues long: Speckle targeted PIP5K1A-regulated poly(A) polymerase (869 aa).

The Matrin-type zinc-finger motif lies at 16–46 (FRCCLCDVTTANRPSLDAHLKGRKHRDLVQL). The RRM domain maps to 56–128 (RSVFVSGFPR…HGLRVRPREQ (73 aa)). The segment at 114-144 (HSLGGHGLRVRPREQKEFQSPASKSPKGVDS) is disordered. Ser205 lines the ATP pocket. Residues Asp216 and Asp218 each contribute to the Mg(2+) site. UTP contacts are provided by Asp216 and Asp218. 2 disordered regions span residues 226-247 (MEETEPDPKAPKVPETSSLDSA) and 259-335 (CTPA…ASKD). 2 stretches are compositionally biased toward polar residues: residues 266-276 (DSLSPTSVQES) and 283-299 (TPSSLAPQTPDSALGSD). A compositionally biased stretch (basic and acidic residues) spans 314–335 (QEDRKEGKQGKELELAEEASKD). Residue Asn395 participates in ATP binding. UTP-binding residues include Asn395, Arg417, Tyr435, and His552. The 59-residue stretch at 494 to 552 (LSSLLAQFFSCVSCLDLSGSLLSLREGRPLMVAEGLPSDLWEGLRLGPMNLQDPFDLSH) folds into the PAP-associated domain. A KA1; binds the bulging loops of U6 snRNA but is dispensable for terminal uridylyltransferase activity region spans residues 601 to 869 (SSPSSLLSAK…IPQALKNLLK (269 aa)). Disordered regions lie at residues 640 to 689 (QGTK…DHSE), 735 to 757 (MKPEVAGEGSQGETGKEASHPSS), 775 to 796 (ARRRLQQQTKEEGRGGPTTGAE), and 803 to 822 (RVTQELKGPNSEQERPPGEP). Residues 671 to 689 (KSFEEGKEEPQGCAGDHSE) show a composition bias toward basic and acidic residues. A phosphoserine mark is found at Ser688 and Ser744.

It belongs to the DNA polymerase type-B-like family. Associates with the cleavage and polyadenylation specificity factor (CPSF) complex. Interacts with CPSF1 and CPSF3; the interaction is direct. Interacts with PIP5K1A. Requires Mg(2+) as cofactor. Mn(2+) serves as cofactor. Phosphorylated by CK1 in the proline-rich (Pro-rich) region.

It localises to the nucleus. It is found in the nucleolus. The protein localises to the nucleus speckle. The enzyme catalyses RNA(n) + UTP = RNA(n)-3'-uridine ribonucleotide + diphosphate. It catalyses the reaction RNA(n) + ATP = RNA(n)-3'-adenine ribonucleotide + diphosphate. Adenylyltransferase activity is specifically phosphatidylinositol 4,5-bisphosphate (PtdIns(4,5)P2). Poly(A) polymerase that creates the 3'-poly(A) tail of specific pre-mRNAs. Localizes to nuclear speckles together with PIP5K1A and mediates polyadenylation of a select set of mRNAs, such as HMOX1. In addition to polyadenylation, it is also required for the 3'-end cleavage of pre-mRNAs: binds to the 3'UTR of targeted pre-mRNAs and promotes the recruitment and assembly of the CPSF complex on the 3'UTR of pre-mRNAs. In addition to adenylyltransferase activity, also has uridylyltransferase activity. However, the ATP ratio is higher than UTP in cells, suggesting that it functions primarily as a poly(A) polymerase. Acts as a specific terminal uridylyltransferase for U6 snRNA in vitro: responsible for a controlled elongation reaction that results in the restoration of the four 3'-terminal UMP-residues found in newly transcribed U6 snRNA. Not involved in replication-dependent histone mRNA degradation. In Mus musculus (Mouse), this protein is Speckle targeted PIP5K1A-regulated poly(A) polymerase (Tut1).